Reading from the N-terminus, the 525-residue chain is MSRLKINLDAIERDGASATEGFCADGVRIGSLLVSSEGVRDNQGNLCVLSLSDLEVVPETEGGFLGKGSSGSVRRAVHRGSNKVVALKEIKVTGQTHINEIRRELETLHAGDFATPYLVSFYGAFAHEGSVFIAMEAMDGSLHELYKPVPPPVLACITRLMLKGLTYLHRNRHLIHRDLKPSNVLYNSRTGDIKISDFGVSSNLECTKADAHSFVGTVTYMSPERLRGEHYSYGADIWSLGLVVAELAVGVCPYAGLRGGSSEARFWALLQHLNGDGTALELPPEMDSDLADFISACVVKSPDRRPTCTELLRHPFIVRYTGAAPEAEAKPFSTTTPTVLAPGGLSSLLNRASPAAGSALPLASEGGTPKATSPSPAPVSPLTLSCPLERHDGETDADIADRTVVARWIHAVMKRAVLHKARGHGREELHQEPLAAVSASVATDSGEGGGAAGVSAASLDNGQAAQHREFRAERNLDGHSGDGGSAPVEEDCTAGVRSLTCDDLRWTSTGEPSVNLDDELNRLLF.

The region spanning 59–317 (ETEGGFLGKG…CTELLRHPFI (259 aa)) is the Protein kinase domain. Residues 65-73 (LGKGSSGSV) and K88 contribute to the ATP site. Residue D178 is the Proton acceptor of the active site. Low complexity predominate over residues 358-367 (SALPLASEGG). Disordered regions lie at residues 358–392 (SALPLASEGGTPKATSPSPAPVSPLTLSCPLERHD) and 438–468 (SASVATDSGEGGGAAGVSAASLDNGQAAQHR).

It belongs to the protein kinase superfamily. STE Ser/Thr protein kinase family. MAP kinase kinase subfamily. The cofactor is Mg(2+).

The enzyme catalyses L-tyrosyl-[protein] + ATP = O-phospho-L-tyrosyl-[protein] + ADP + H(+). It catalyses the reaction L-seryl-[protein] + ATP = O-phospho-L-seryl-[protein] + ADP + H(+). It carries out the reaction L-threonyl-[protein] + ATP = O-phospho-L-threonyl-[protein] + ADP + H(+). Its function is as follows. Protein kinase which phosphorylates and activates MPK4 in vitro. The protein is Mitogen-activated protein kinase kinase 5 of Leishmania mexicana.